We begin with the raw amino-acid sequence, 394 residues long: Obg-like ATPase 1 (394 aa).

One can recognise an OBG-type G domain in the interval 21-285 (LKAGIVGLAN…MSPEDAEEEL (265 aa)). 30–35 (NVGKST) is a binding site for ATP. Mg(2+) contacts are provided by serine 34 and threonine 55. At threonine 89 the chain carries Phosphothreonine. A Glycyl lysine isopeptide (Lys-Gly) (interchain with G-Cter in ubiquitin) cross-link involves residue lysine 98. Phosphoserine is present on residues serine 116 and serine 119. Leucine 233 is an ATP binding site. Residues 306–389 (DLISFFTCGP…EDGDIIYFRA (84 aa)) form the TGS domain.

The protein belongs to the TRAFAC class OBG-HflX-like GTPase superfamily. OBG GTPase family. YchF/OLA1 subfamily. As to quaternary structure, monomer. Interacts with the 26S proteasome subunit RPT6. Mg(2+) is required as a cofactor.

Its subcellular location is the cytoplasm. Hydrolyzes ATP, and can also hydrolyze GTP with lower efficiency. Has lower affinity for GTP. The protein is Obg-like ATPase 1 of Saccharomyces cerevisiae (strain ATCC 204508 / S288c) (Baker's yeast).